The primary structure comprises 1770 residues: Transposon Ty2-C Gag-Pol polyprotein (1770 aa).

Polar residues-rich tracts occupy residues 1 to 11 (MESQQLHQNPR), 19 to 39 (ASVT…SASN), and 49 to 60 (KVNSQQETTPGT). Disordered regions lie at residues 1-88 (MESQ…YQQH) and 355-453 (SQYK…LPDH). The tract at residues 295–397 (ENNINVSDRL…SSKPRAAKAH (103 aa)) is RNA-binding. Residues 369–382 (TSPNTTNTKVTTRN) show a composition bias toward low complexity. Composition is skewed to polar residues over residues 399 to 408 (IATSSKFSRV) and 415 to 435 (ESTV…GQQQ). D457 functions as the For protease activity; shared with dimeric partner in the catalytic mechanism. Residues 579 to 636 (NVNKSKSVNKYPYPLIHRMLGHANFRSIQKSLKKNAVTYLKESDIEWSNASTYQCPDC) form an integrase-type zinc finger-like region. One can recognise an Integrase catalytic domain in the interval 656-831 (ESYEPFQYLH…AGLDITTILP (176 aa)). D667 and D732 together coordinate Mg(2+). 2 disordered regions span residues 1003 to 1038 (EMGG…MIDL) and 1057 to 1205 (GGTE…TEIE). Composition is skewed to polar residues over residues 1009-1024 (ESDT…FTAR) and 1065-1082 (QRNS…STPS). Positions 1193–1227 (KKRSLEDNETEIEVSRDTWNNKNMRSLEPPRSKKR) match the Bipartite nuclear localization signal motif. The region spanning 1353–1491 (NDYYITQLDI…DILGLEIKYQ (139 aa)) is the Reverse transcriptase Ty1/copia-type domain. Mg(2+) is bound by residues D1361, D1442, D1443, D1625, E1667, and D1700. The RNase H Ty1/copia-type domain occupies 1625 to 1767 (DASYGNQPYY…IKTFKLLTNK (143 aa)).

As to quaternary structure, the capsid protein forms a homotrimer, from which the VLPs are assembled. The protease is a homodimer, whose active site consists of two apposed aspartic acid residues. In terms of processing, initially, virus-like particles (VLPs) are composed of the structural unprocessed proteins Gag and Gag-Pol, and also contain the host initiator methionine tRNA (tRNA(i)-Met) which serves as a primer for minus-strand DNA synthesis, and a dimer of genomic Ty RNA. Processing of the polyproteins occurs within the particle and proceeds by an ordered pathway, called maturation. First, the protease (PR) is released by autocatalytic cleavage of the Gag-Pol polyprotein, and this cleavage is a prerequisite for subsequent processing at the remaining sites to release the mature structural and catalytic proteins. Maturation takes place prior to the RT reaction and is required to produce transposition-competent VLPs.

It localises to the cytoplasm. The protein resides in the nucleus. It carries out the reaction DNA(n) + a 2'-deoxyribonucleoside 5'-triphosphate = DNA(n+1) + diphosphate. It catalyses the reaction Endonucleolytic cleavage to 5'-phosphomonoester.. Functionally, capsid protein (CA) is the structural component of the virus-like particle (VLP), forming the shell that encapsulates the retrotransposons dimeric RNA genome. The particles are assembled from trimer-clustered units and there are holes in the capsid shells that allow for the diffusion of macromolecules. CA also has nucleocapsid-like chaperone activity, promoting primer tRNA(i)-Met annealing to the multipartite primer-binding site (PBS), dimerization of Ty2 RNA and initiation of reverse transcription. Its function is as follows. The aspartyl protease (PR) mediates the proteolytic cleavages of the Gag and Gag-Pol polyproteins after assembly of the VLP. In terms of biological role, reverse transcriptase/ribonuclease H (RT) is a multifunctional enzyme that catalyzes the conversion of the retro-elements RNA genome into dsDNA within the VLP. The enzyme displays a DNA polymerase activity that can copy either DNA or RNA templates, and a ribonuclease H (RNase H) activity that cleaves the RNA strand of RNA-DNA heteroduplexes during plus-strand synthesis and hydrolyzes RNA primers. The conversion leads to a linear dsDNA copy of the retrotransposon that includes long terminal repeats (LTRs) at both ends. Integrase (IN) targets the VLP to the nucleus, where a subparticle preintegration complex (PIC) containing at least integrase and the newly synthesized dsDNA copy of the retrotransposon must transit the nuclear membrane. Once in the nucleus, integrase performs the integration of the dsDNA into the host genome. This is Transposon Ty2-C Gag-Pol polyprotein (TY2B-C) from Saccharomyces cerevisiae (strain ATCC 204508 / S288c) (Baker's yeast).